The following is a 186-amino-acid chain: TATA box-binding protein-like 1 (186 aa).

Belongs to the TBP family.

It localises to the cytoplasm. It is found in the nucleus. Its function is as follows. Part of a specialized transcription system that mediates the transcription of most ribosomal proteins through the 5'-TCT-3' motif which is a core promoter element at these genes. Seems to also mediate the transcription of NF1. Does not bind the TATA box. Members of the TBP family are differentially required to regulate transcription and development during early embryogenesis. In Danio rerio (Zebrafish), this protein is TATA box-binding protein-like 1.